The following is a 294-amino-acid chain: Retinoic acid receptor responder protein 1 (294 aa).

The Lumenal segment spans residues 1-20 (MQPRRQRLPAPWSGPRGPRP). A helical; Signal-anchor for type III membrane protein transmembrane segment spans residues 21-42 (TAPLLALLLLLAPVAAPAGSGD). Cystatin LXN-type domains are found at residues 38-153 (AGSG…EKKK) and 173-276 (EIVS…TPEE). A glycan (O-linked (Xyl...) (chondroitin sulfate) serine) is linked at serine 40. At 43–294 (PDDPGQPQDA…AVVPTELSNF (252 aa)) the chain is on the cytoplasmic side. The interval 273–294 (TPEEASGTEEGSAVVPTELSNF) is disordered.

This sequence belongs to the protease inhibitor I47 (latexin) family. In terms of assembly, interacts with AGBL2, KIF11 and MAPRE1. Not N-glycosylated. O-glycosylated; contains chondroitin sulfate. Detected in urine (at protein level).

The protein resides in the membrane. The protein localises to the secreted. Its function is as follows. Inhibitor of the cytoplasmic carboxypeptidase AGBL2, may regulate the alpha-tubulin tyrosination cycle. In Homo sapiens (Human), this protein is Retinoic acid receptor responder protein 1 (RARRES1).